Consider the following 342-residue polypeptide: GTPase Obg (342 aa).

An Obg domain is found at 1–159 (MQFIDQAQIE…KLLRLELKLL (159 aa)). One can recognise an OBG-type G domain in the interval 160-330 (AEVGIIGLPN…MLQEVWGILD (171 aa)). Residues 166–173 (GLPNAGKS), 191–195 (FTTLI), 213–216 (DIPG), 280–283 (NKID), and 311–313 (SAV) each bind GTP. Mg(2+)-binding residues include serine 173 and threonine 193.

Belongs to the TRAFAC class OBG-HflX-like GTPase superfamily. OBG GTPase family. Monomer. It depends on Mg(2+) as a cofactor.

It is found in the cytoplasm. In terms of biological role, an essential GTPase which binds GTP, GDP and possibly (p)ppGpp with moderate affinity, with high nucleotide exchange rates and a fairly low GTP hydrolysis rate. Plays a role in control of the cell cycle, stress response, ribosome biogenesis and in those bacteria that undergo differentiation, in morphogenesis control. This chain is GTPase Obg, found in Trichormus variabilis (strain ATCC 29413 / PCC 7937) (Anabaena variabilis).